We begin with the raw amino-acid sequence, 535 residues long: Probable anion transporter 2, chloroplastic (535 aa).

Residues 1 to 95 (MASIRSCVSV…RERAVAAMCS (95 aa)) constitute a chloroplast transit peptide. 12 helical membrane-spanning segments follow: residues 125–145 (VVAL…VMSV), 160–180 (FLGI…MVGG), 191–211 (VMAG…WAAS), 215–235 (IMLL…FPTM), 254–274 (ISMG…PIIM), 279–299 (LAGT…VWLF), 343–363 (IEMW…FVLL), 381–401 (AAWF…VAGA), 413–433 (VALV…VSLL), 443–463 (VAAV…AGYF), 483–503 (GIGT…VQWL), and 504–524 (GSFQ…TVFY).

This sequence belongs to the major facilitator superfamily. Sodium/anion cotransporter (TC 2.A.1.14) family.

Its subcellular location is the plastid. The protein resides in the chloroplast membrane. Probable anion transporter. This Oryza sativa subsp. japonica (Rice) protein is Probable anion transporter 2, chloroplastic (PHT4;2).